The following is a 227-amino-acid chain: UPF0758 protein CPF_2399 (227 aa).

The MPN domain maps to 105–227 (KISKPSDVAK…FISLKEKDIL (123 aa)). Zn(2+) contacts are provided by His-176, His-178, and Asp-189. A JAMM motif motif is present at residues 176-189 (HNHPSGDPTPSRDD).

Belongs to the UPF0758 family.

The sequence is that of UPF0758 protein CPF_2399 from Clostridium perfringens (strain ATCC 13124 / DSM 756 / JCM 1290 / NCIMB 6125 / NCTC 8237 / Type A).